A 572-amino-acid polypeptide reads, in one-letter code: Hsp70-Hsp90 organizing protein 1 (572 aa).

TPR repeat units lie at residues 2–35 (AEEAKAKGNAAFSSGDFTTAINHFTEAIALAPTN), 37–69 (VLFSNRSAAHASLHQYAEALSDAKETIKLKPYW), and 70–103 (PKGYSRLGAAHLGLNQFELAVTAYKKGLDVDPTN). Residues 133-172 (GPEMWTKLTSDPSTRGFLQQPDFVNMMQEIQKNPSSLNLY) form the STI1 1 domain. At Ser-167 the chain carries Phosphoserine. The tract at residues 189-248 (KFRPPPPQGDEAEVPESDMGQSSSNEPEVEKKREPEPEPEPEVTEEKEKKERKEKAKKEK) is disordered. Positions 232–248 (TEEKEKKERKEKAKKEK) are enriched in basic and acidic residues. The short motif at 241–258 (KEKAKKEKELGNAAYKKK) is the Bipartite nuclear localization signal element. TPR repeat units follow at residues 244 to 277 (AKKEKELGNAAYKKKDFETAIQHYSTAIEIDDED), 279 to 311 (SYLTNRAAVYLEMGKYNECIEDCNKAVERGREL), 319 to 356 (ARALTRKGTALTKMAKCSKDYEPAIEAFQKALTEHRNP), 358 to 382 (TLKRLNDAERAKKEWEQKQYFDPKL), 383 to 416 (GDEEREKGNDFFKEQKYPEAIKHYTEAIKRNPND), 418 to 450 (KAYSNRAASYTKLGAMPEGLKDAEKCIELDPTF), and 451 to 484 (SKGYSRKAAVQFFLKEYDNAMETYQAGLEHDPSN). The 40-residue stretch at 521 to 560 (DPEIQNILTDPVMRQVLSDLQENPSAAQKHMQNPMVMNKI) folds into the STI1 2 domain.

In terms of assembly, co-chaperone that forms a complex with HSP70 and HSP90 and preproteins (e.g. chloroplast preproteins). In terms of processing, phosphorylated. Post-translationally, acetylated.

The protein localises to the cytoplasm. It is found in the nucleus. In terms of biological role, mediates the association of the molecular chaperones HSP70 and HSP90. Mediates nuclear encoded chloroplast preproteins binding to HSP90 prior to chloroplastic sorting. This chain is Hsp70-Hsp90 organizing protein 1 (HOP1), found in Arabidopsis thaliana (Mouse-ear cress).